The sequence spans 629 residues: Protein SPT2 homolog (629 aa).

The tract at residues 1-522 (MDFDSVLSIA…SGHRILVKPS (522 aa)) is important for interaction with DNA. The stretch at 45–72 (QAFLKKKAVEQKNKEQQDKKAKEDLLAK) forms a coiled coil. The span at 53–93 (VEQKNKEQQDKKAKEDLLAKRVELKSDRKARAMASRTKDNF) shows a compositional bias: basic and acidic residues. Disordered regions lie at residues 53 to 181 (VEQK…ASSS), 206 to 533 (KTEE…TSSY), and 608 to 629 (EDEE…KKRK). A compositionally biased stretch (polar residues) spans 111–123 (KGSSTEEQQSSTK). The segment covering 127–144 (GDYDDEDNFDYEGTDSES) has biased composition (acidic residues). The stretch at 203-228 (VVKKTEERLRTAEEIRELEMERRVKK) forms a coiled coil. 2 stretches are compositionally biased toward basic and acidic residues: residues 206–247 (KTEE…KDSR) and 257–277 (KHVD…EKHQ). Composition is skewed to polar residues over residues 278 to 297 (SSST…TPTS), 305 to 327 (SNSG…SFQA), 335 to 345 (SQGQRPATPSD), 353 to 364 (VSLTQAKSSISG), 387 to 398 (SNFSTSGPSQKP), 437 to 450 (NLQS…SRAS), and 462 to 490 (SGSQ…TKNI). Positions 523–629 (GPALPPITSS…MQRKNAKKRK (107 aa)) are important for interaction with histones. Positions 591–629 (WKEQQKEEARSLRMAVLEDEEEERRELEEMQRKNAKKRK) form a coiled coil.

This sequence belongs to the SPT2 family. As to quaternary structure, interacts with histones. Interacts with a heterotetrameric complex formed by histone H3 and H4, especially when the histone tetramer is not bound to DNA.

It is found in the nucleus. The protein localises to the nucleolus. Its function is as follows. Histone chaperone that stabilizes pre-existing histone tetramers and regulates replication-independent histone exchange on chromatin. Required for normal chromatin refolding in the coding region of transcribed genes, and for the suppression of spurious transcription. Binds DNA and histones and promotes nucleosome assembly (in vitro). Facilitates formation of tetrameric histone complexes containing histone H3 and H4. Modulates RNA polymerase 1-mediated transcription. Binds DNA, with a preference for branched DNA species, such as Y-form DNA and Holliday junction DNA. The sequence is that of Protein SPT2 homolog (spty2d1) from Danio rerio (Zebrafish).